We begin with the raw amino-acid sequence, 778 residues long: MASSEGSYRDLEKKLKNGLTSISQDIVDKYGNLKVSLNVNATAKLIFDRLENLEDIAEMSTRNLSNLIDQTAKDSPEMLAEIKSQAQSCENLVEFLQSMKNVEEQLIIMRSKTTNRVEWGTAILACKDFLNDTNMLLEGIGRDGFDMSVPLKHFAAEYSVLSYNCRYQLSADYERAMNVPKLSKQKCGDRTNVSFSVFNVGSVEDQKMLNETLSAMNMIGQLPERLDAWKIVILNVFCEAIVASRDGVDVYIVDNPTPDQTRFLINQKPRGKKDKTIDVAKVLESMEVFFTKLHSVLHSHELLDATGKTFTSMIGSVIEEQLITMILKDVIAIAAPVTETADEDQEMFINLLQIGEVFVERMKELGFFSQKAKLLFTLDTDTIFVTRRCFAIVSKANKLINETYDKLVTVGVDDSAIKDIDLLAKAHTHAEHFAKEYGKDLGRLWSHNEDSQFPSFFAFQKCTVSESTINFVNLLRDNVKAAFACEDEGARAKLALTAENIVRLYVILTPRKHAELFSSIPNMAAIFYNNCHYISHCIMTMSFEASGDNQKTLLEPLLLDSVIRLRTVAADCMEKTLTRCRREMTAYLEDHSIFEHLPASYKTTKNTFAAAEEMSESADILVPREEPKIIKCLAACLLHIRLIAKNLREPLTEVVYCKVIGSLVSFLLDSLVRHVVTTSDFRENDANVMADVFKRLLEVVANIVAYKEQTKVTDFCAREYFRLNEIVFVLGNRMQDIEHRWFNAKGPMAEHLSRSEVVGLIKALFADSQHRSDLIARL.

Residues 47-99 (FDRLENLEDIAEMSTRNLSNLIDQTAKDSPEMLAEIKSQAQSCENLVEFLQSM) adopt a coiled-coil conformation.

The protein belongs to the ZW10 family. As to quaternary structure, component of the RZZ complex composed of rod-1, czw-1 and zwl-1.

It is found in the chromosome. Its subcellular location is the centromere. It localises to the kinetochore. The protein resides in the cytoplasm. The protein localises to the cytoskeleton. It is found in the spindle. Essential component of the mitotic checkpoint, which prevents cells from prematurely exiting mitosis. Required for the assembly of the dynein-dynactin and mdf-1-mdf-2 complexes onto kinetochores. Its function related to the spindle assembly machinery and kinetochore-microtubule attachments likely depends on its association in the mitotic RZZ complex. The RZZ complex recruits the spindly-like protein spdl-1 to kinetochores. To prevent irregular chromosome segregation, the complex also inhibits the attachment of the kinetochore-associated NDC80 complex to microtubules. The recruitment of spdl-1 to kinetochores relieves this inhibition. Required for embryonic development. This chain is Centromere/kinetochore protein zw10 homolog, found in Caenorhabditis elegans.